A 241-amino-acid chain; its full sequence is CRISPR-associated endoribonuclease Cas6 2 (241 aa).

Y28 functions as the Proton acceptor in the catalytic mechanism. H40 functions as the Proton donor in the catalytic mechanism.

It belongs to the CRISPR-associated protein Cas6/Cse3/CasE family.

Functionally, CRISPR (clustered regularly interspaced short palindromic repeat) is an adaptive immune system that provides protection against mobile genetic elements (viruses, transposable elements and conjugative plasmids). CRISPR clusters contain sequences complementary to antecedent mobile elements and target invading nucleic acids. CRISPR clusters are transcribed and processed into CRISPR RNA (crRNA). This protein processes pre-crRNA into individual crRNA units. The sequence is that of CRISPR-associated endoribonuclease Cas6 2 (cas6b) from Methanocaldococcus jannaschii (strain ATCC 43067 / DSM 2661 / JAL-1 / JCM 10045 / NBRC 100440) (Methanococcus jannaschii).